A 267-amino-acid polypeptide reads, in one-letter code: Aliphatic sulfonates import ATP-binding protein SsuB 1 (267 aa).

In terms of domain architecture, ABC transporter spans 35–249 (VRVRGLRRVF…RRADPAFDRL (215 aa)). 67 to 74 (GRSGSGKS) provides a ligand contact to ATP.

This sequence belongs to the ABC transporter superfamily. Aliphatic sulfonates importer (TC 3.A.1.17.2) family. In terms of assembly, the complex is composed of two ATP-binding proteins (SsuB), two transmembrane proteins (SsuC) and a solute-binding protein (SsuA).

It is found in the cell membrane. The catalysed reaction is ATP + H2O + aliphatic sulfonate-[sulfonate-binding protein]Side 1 = ADP + phosphate + aliphatic sulfonateSide 2 + [sulfonate-binding protein]Side 1.. In terms of biological role, part of the ABC transporter complex SsuABC involved in aliphatic sulfonates import. Responsible for energy coupling to the transport system. This is Aliphatic sulfonates import ATP-binding protein SsuB 1 from Frankia alni (strain DSM 45986 / CECT 9034 / ACN14a).